The following is a 541-amino-acid chain: Apolipoprotein N-acyltransferase (541 aa).

6 helical membrane-spanning segments follow: residues 21–41 (MSWF…WYSL), 54–74 (LTSL…SWML), 89–109 (VLIS…FFIV), 116–136 (ILWC…YFLC), 157–177 (FGGF…GISF), and 189–209 (YVWL…YEYL). Residues 219-500 (LRVAVIQPAS…PGVLQVSLPM (282 aa)) enclose the CN hydrolase domain. The active-site Proton acceptor is E265. Residue K350 is part of the active site. C405 serves as the catalytic Nucleophile. The chain crosses the membrane as a helical span at residues 506 to 526 (LYAFWGDFPMIFLSLLSIGCI).

This sequence belongs to the CN hydrolase family. Apolipoprotein N-acyltransferase subfamily.

The protein resides in the cell inner membrane. The enzyme catalyses N-terminal S-1,2-diacyl-sn-glyceryl-L-cysteinyl-[lipoprotein] + a glycerophospholipid = N-acyl-S-1,2-diacyl-sn-glyceryl-L-cysteinyl-[lipoprotein] + a 2-acyl-sn-glycero-3-phospholipid + H(+). It participates in protein modification; lipoprotein biosynthesis (N-acyl transfer). In terms of biological role, catalyzes the phospholipid dependent N-acylation of the N-terminal cysteine of apolipoprotein, the last step in lipoprotein maturation. This chain is Apolipoprotein N-acyltransferase, found in Chlamydia caviae (strain ATCC VR-813 / DSM 19441 / 03DC25 / GPIC) (Chlamydophila caviae).